The following is a 308-amino-acid chain: MHKDDILKELKKVLPEEIIKVDEPLKRYTYTQTGGNADFYLSPTTNEQVQAINHLARMNNIPVTYLGNGSNIIIREGGIRGIVLSLLSMDYIKVEDNVIIAGSGAAIIDVSRKARDYSLTGLEFACGIPGSIGGAVFMNAGAYGGEVRDCIEHAVCVNERGEIVTLTRDELELGYRSSIVQKQHLVVLEASFNLAPGNQEEIQSVMDDLTNRRETKQPLEYPSCGSVFQRPPGHFAGKLIQDSELQGHRIGGVEVSKKHAGFMVNVDNGTATDYEDLIHHVQNVVKEKFDVELHPEVRIIGDHPEEHQ.

Residues 33–197 (TGGNADFYLS…LEASFNLAPG (165 aa)) enclose the FAD-binding PCMH-type domain. Arg-176 is a catalytic residue. The active-site Proton donor is the Ser-226. Residue Glu-296 is part of the active site.

The protein belongs to the MurB family. FAD is required as a cofactor.

It is found in the cytoplasm. It carries out the reaction UDP-N-acetyl-alpha-D-muramate + NADP(+) = UDP-N-acetyl-3-O-(1-carboxyvinyl)-alpha-D-glucosamine + NADPH + H(+). It participates in cell wall biogenesis; peptidoglycan biosynthesis. Functionally, cell wall formation. The protein is UDP-N-acetylenolpyruvoylglucosamine reductase of Staphylococcus carnosus (strain TM300).